Here is a 61-residue protein sequence, read N- to C-terminus: Photosystem II reaction center protein K (61 aa).

A propeptide spanning residues 1-24 is cleaved from the precursor; the sequence is MLNIFSLISICLNSALYSSSFFFG. A helical transmembrane segment spans residues 40-60; it reads MPVIPVFFFLLAFVWQAAVSF.

Belongs to the PsbK family. In terms of assembly, PSII is composed of 1 copy each of membrane proteins PsbA, PsbB, PsbC, PsbD, PsbE, PsbF, PsbH, PsbI, PsbJ, PsbK, PsbL, PsbM, PsbT, PsbX, PsbY, PsbZ, Psb30/Ycf12, at least 3 peripheral proteins of the oxygen-evolving complex and a large number of cofactors. It forms dimeric complexes.

The protein localises to the plastid. It localises to the chloroplast thylakoid membrane. Functionally, one of the components of the core complex of photosystem II (PSII). PSII is a light-driven water:plastoquinone oxidoreductase that uses light energy to abstract electrons from H(2)O, generating O(2) and a proton gradient subsequently used for ATP formation. It consists of a core antenna complex that captures photons, and an electron transfer chain that converts photonic excitation into a charge separation. The polypeptide is Photosystem II reaction center protein K (Jasminum nudiflorum (Winter jasmine)).